A 754-amino-acid polypeptide reads, in one-letter code: 5-methyltetrahydropteroyltriglutamate--homocysteine methyltransferase (754 aa).

Residues 17–20 and lysine 117 contribute to the 5-methyltetrahydropteroyltri-L-glutamate site; that span reads RELK. L-homocysteine is bound by residues 431–433 and glutamate 484; that span reads IGS. Residues 431–433 and glutamate 484 each bind L-methionine; that span reads IGS. 5-methyltetrahydropteroyltri-L-glutamate is bound by residues 515–516 and tryptophan 561; that span reads RC. Residue aspartate 599 participates in L-homocysteine binding. An L-methionine-binding site is contributed by aspartate 599. Glutamate 605 is a binding site for 5-methyltetrahydropteroyltri-L-glutamate. Residues histidine 641, cysteine 643, and glutamate 665 each contribute to the Zn(2+) site. The Proton donor role is filled by histidine 694. Cysteine 726 is a Zn(2+) binding site.

This sequence belongs to the vitamin-B12 independent methionine synthase family. Zn(2+) serves as cofactor.

It catalyses the reaction 5-methyltetrahydropteroyltri-L-glutamate + L-homocysteine = tetrahydropteroyltri-L-glutamate + L-methionine. The protein operates within amino-acid biosynthesis; L-methionine biosynthesis via de novo pathway; L-methionine from L-homocysteine (MetE route): step 1/1. Functionally, catalyzes the transfer of a methyl group from 5-methyltetrahydrofolate to homocysteine resulting in methionine formation. This Pectobacterium atrosepticum (strain SCRI 1043 / ATCC BAA-672) (Erwinia carotovora subsp. atroseptica) protein is 5-methyltetrahydropteroyltriglutamate--homocysteine methyltransferase.